The chain runs to 446 residues: UDP-N-acetylmuramate--L-alanine ligase (446 aa).

122-128 contacts ATP; the sequence is GTHGKTT.

This sequence belongs to the MurCDEF family.

It is found in the cytoplasm. It catalyses the reaction UDP-N-acetyl-alpha-D-muramate + L-alanine + ATP = UDP-N-acetyl-alpha-D-muramoyl-L-alanine + ADP + phosphate + H(+). It participates in cell wall biogenesis; peptidoglycan biosynthesis. In terms of biological role, cell wall formation. In Nocardioides sp. (strain ATCC BAA-499 / JS614), this protein is UDP-N-acetylmuramate--L-alanine ligase.